The sequence spans 232 residues: Phosphatidylserine decarboxylase proenzyme (232 aa).

Ser-190 acts as the Schiff-base intermediate with substrate; via pyruvic acid in catalysis. A Pyruvic acid (Ser); by autocatalysis modification is found at Ser-190.

The protein belongs to the phosphatidylserine decarboxylase family. PSD-A subfamily. As to quaternary structure, heterodimer of a large membrane-associated beta subunit and a small pyruvoyl-containing alpha subunit. It depends on pyruvate as a cofactor. Is synthesized initially as an inactive proenzyme. Formation of the active enzyme involves a self-maturation process in which the active site pyruvoyl group is generated from an internal serine residue via an autocatalytic post-translational modification. Two non-identical subunits are generated from the proenzyme in this reaction, and the pyruvate is formed at the N-terminus of the alpha chain, which is derived from the carboxyl end of the proenzyme. The post-translation cleavage follows an unusual pathway, termed non-hydrolytic serinolysis, in which the side chain hydroxyl group of the serine supplies its oxygen atom to form the C-terminus of the beta chain, while the remainder of the serine residue undergoes an oxidative deamination to produce ammonia and the pyruvoyl prosthetic group on the alpha chain.

Its subcellular location is the cell membrane. It carries out the reaction a 1,2-diacyl-sn-glycero-3-phospho-L-serine + H(+) = a 1,2-diacyl-sn-glycero-3-phosphoethanolamine + CO2. Its pathway is phospholipid metabolism; phosphatidylethanolamine biosynthesis; phosphatidylethanolamine from CDP-diacylglycerol: step 2/2. Its function is as follows. Catalyzes the formation of phosphatidylethanolamine (PtdEtn) from phosphatidylserine (PtdSer). In Rhizobium rhizogenes (strain K84 / ATCC BAA-868) (Agrobacterium radiobacter), this protein is Phosphatidylserine decarboxylase proenzyme.